The primary structure comprises 453 residues: Ribosomal protein uS12 methylthiotransferase RimO (453 aa).

Residues 4-120 enclose the MTTase N-terminal domain; that stretch reads TSVHIVSLGC…IADHLRVLME (117 aa). [4Fe-4S] cluster-binding residues include cysteine 13, cysteine 49, cysteine 83, cysteine 161, cysteine 165, and cysteine 168. A Radical SAM core domain is found at 147–377; that stretch reads STPPYSAYLK…MEEQAVISHE (231 aa). The 71-residue stretch at 380–450 folds into the TRAM domain; that stretch reads QTLVGSLQEV…DYDLFAEVIS (71 aa).

The protein belongs to the methylthiotransferase family. RimO subfamily. The cofactor is [4Fe-4S] cluster.

It is found in the cytoplasm. It carries out the reaction L-aspartate(89)-[ribosomal protein uS12]-hydrogen + (sulfur carrier)-SH + AH2 + 2 S-adenosyl-L-methionine = 3-methylsulfanyl-L-aspartate(89)-[ribosomal protein uS12]-hydrogen + (sulfur carrier)-H + 5'-deoxyadenosine + L-methionine + A + S-adenosyl-L-homocysteine + 2 H(+). Functionally, catalyzes the methylthiolation of an aspartic acid residue of ribosomal protein uS12. The protein is Ribosomal protein uS12 methylthiotransferase RimO of Syntrophus aciditrophicus (strain SB).